The sequence spans 428 residues: Beta-1,3-galactosyl-O-glycosyl-glycoprotein beta-1,6-N-acetylglucosaminyltransferase (428 aa).

The Cytoplasmic portion of the chain corresponds to 1–9; it reads MLRTLLRRR. A mediates interaction with GOLPH3 and is necessary and sufficient for localization to the Golgi region spans residues 5–9; the sequence is LLRRR. Residues 10–32 traverse the membrane as a helical; Signal-anchor for type II membrane protein segment; it reads LFSYPTKYYFMVLVLSLITFSVL. The tract at residues 33–121 is stem region; sequence RIHQKPEFVS…EPLSKEEAEF (89 aa). Topologically, residues 33-428 are lumenal; the sequence is RIHQKPEFVS…RHKALETLKH (396 aa). 2 N-linked (GlcNAc...) asparagine glycosylation sites follow: Asn-58 and Asn-95. 4 disulfides stabilise this stretch: Cys-59–Cys-413, Cys-100–Cys-172, Cys-151–Cys-199, and Cys-372–Cys-381. Positions 122–428 are catalytic; it reads PIAYSIVVHH…RHKALETLKH (307 aa). UDP-N-acetyl-alpha-D-glucosamine is bound by residues 128–130, 155–157, and Tyr-187; these read VVH and DTK. Glu-243, Lys-251, Arg-254, Glu-320, Lys-341, and Tyr-358 together coordinate a glycoprotein. Glu-320 (nucleophile) is an active-site residue. UDP-N-acetyl-alpha-D-glucosamine is bound by residues Arg-378 and Lys-401.

Belongs to the glycosyltransferase 14 family. As to quaternary structure, interacts with GOLPH3; may control GCNT1 retention in the Golgi. Highly expressed in activated T-lymphocytes and myeloid cells.

Its subcellular location is the golgi apparatus membrane. It carries out the reaction a 3-O-[beta-D-galactosyl-(1-&gt;3)-N-acetyl-alpha-D-galactosaminyl]-L-seryl-[protein] + UDP-N-acetyl-alpha-D-glucosamine = 3-O-{beta-D-galactosyl-(1-&gt;3)-[N-acetyl-beta-D-glucosaminyl-(1-&gt;6)]-N-acetyl-alpha-D-galactosaminyl}-L-seryl-[protein] + UDP + H(+). The enzyme catalyses a 3-O-[beta-D-galactosyl-(1-&gt;3)-N-acetyl-alpha-D-galactosaminyl]-L-threonyl-[protein] + UDP-N-acetyl-alpha-D-glucosamine = a 3-O-{beta-D-galactosyl-(1-&gt;3)-[N-acetyl-beta-D-glucosaminyl-(1-&gt;6)]-N-acetyl-alpha-D-galactosaminyl}-L-threonyl-[protein] + UDP + H(+). It catalyses the reaction a globoside GalGb4Cer + UDP-N-acetyl-alpha-D-glucosamine = a globoside GlcNAc-(beta1-&gt;6)-GalGb4Cer + UDP + H(+). The catalysed reaction is a ganglioside GA1 + UDP-N-acetyl-alpha-D-glucosamine = a ganglioside beta-D-GlcNAc-(1-&gt;6)-GA1 + UDP + H(+). The protein operates within protein modification; protein glycosylation. It participates in glycolipid biosynthesis. Its function is as follows. Glycosyltransferase that catalyzes the transfer of an N-acetylglucosamine (GlcNAc) moiety in beta1-6 linkage from UDP-GlcNAc onto mucin-type core 1 O-glycan to form the branched mucin-type core 2 O-glycan. The catalysis is metal ion-independent and occurs with inversion of the anomeric configuration of sugar donor. Selectively involved in synthesis of mucin-type core 2 O-glycans that serve as scaffolds for the display of selectin ligand sialyl Lewis X epitope by myeloid cells, with an impact on homeostasis and recruitment to inflammatory sites. Can also act on glycolipid substrates. Transfers GlcNAc moiety to GalGb4Cer globosides in a reaction step to the synthesis of stage-specific embryonic antigen 1 (SSEA-1) determinant. Can use Galbeta1-3GalNAcalpha1- and Galbeta1-3GalNAcbeta1- oligosaccharide derivatives as acceptor substrates. The polypeptide is Beta-1,3-galactosyl-O-glycosyl-glycoprotein beta-1,6-N-acetylglucosaminyltransferase (GCNT1) (Homo sapiens (Human)).